A 223-amino-acid chain; its full sequence is DNA replication complex GINS protein SLD5 (223 aa).

Residue Met1 is modified to N-acetylmethionine. Residue Thr2 is modified to N-acetylthreonine; in DNA replication complex GINS protein SLD5, N-terminally processed. Ser12 and Ser16 each carry phosphoserine. Residues 166–223 (DLDSYVFLRVKERQENILVEPEADEQRDYVIDLEVGSQHLIRYKTIAPLVASGAVQLI) form an important for GINS complex assembly region.

The protein belongs to the GINS4/SLD5 family. Component of the CMG helicase complex, a hexameric ring of related MCM2-7 subunits stabilized by CDC45 and the tetrameric GINS complex. Associated with ORC2. Interacts with HELB. In terms of tissue distribution, highly abundant in testis. Weakly expressed in thymus and bone marrow.

It localises to the nucleus. It is found in the chromosome. The protein resides in the cytoplasm. In terms of biological role, required for initiation of chromosomal DNA replication. Core component of CDC45-MCM-GINS (CMG) helicase, the molecular machine that unwinds template DNA during replication, and around which the replisome is built. This chain is DNA replication complex GINS protein SLD5 (Gins4), found in Mus musculus (Mouse).